A 502-amino-acid polypeptide reads, in one-letter code: Putative ZDHHC-type palmitoyltransferase 3 (502 aa).

The disordered stretch occupies residues 1–80 (MVNNNNKNNK…ESTNENNKKL (80 aa)). Residues 10–30 (KINDRENEENEKNKKKDKIYE) show a composition bias toward basic and acidic residues. Over residues 31 to 52 (NKIGINENNNENNNYQNENFIY) the composition is skewed to low complexity. N58 is a glycosylation site (N-linked (GlcNAc...) asparagine). Acidic residues predominate over residues 59 to 73 (DTQEGDISEIQEEST). The next 2 membrane-spanning stretches (helical) occupy residues 104–124 (FFIV…IKLV) and 134–154 (LEIS…YNLY). The tract at residues 200-281 (IANDDPISSS…NNNNNNNKNQ (82 aa)) is disordered. Low complexity predominate over residues 203 to 212 (DDPISSSSDF). Over residues 213–222 (SDSDDDDQDE) the composition is skewed to acidic residues. Residues 248–280 (NSNNNNSNNNNNNNKNRNRNNNNNNNNNNNNKN) show a composition bias toward low complexity. N-linked (GlcNAc...) asparagine glycans are attached at residues N252 and N280. Residues 299-349 (KFCITCGLYREPRSFHCSTCNNCVENFDHHCVWIGNCIGRRNYREFFYFIT) enclose the DHHC domain. Residue C329 is the S-palmitoyl cysteine intermediate of the active site. Residues 344–364 (FFYFITTTLIYALYLLSMSIV) traverse the membrane as a helical segment. 3 N-linked (GlcNAc...) asparagine glycosylation sites follow: N371, N388, and N393. A helical transmembrane segment spans residues 419–439 (GLCIFIIIFGFIMSLLLGFLV). N449, N483, and N494 each carry an N-linked (GlcNAc...) asparagine glycan.

Belongs to the DHHC palmitoyltransferase family.

The protein localises to the membrane. The catalysed reaction is L-cysteinyl-[protein] + hexadecanoyl-CoA = S-hexadecanoyl-L-cysteinyl-[protein] + CoA. This chain is Putative ZDHHC-type palmitoyltransferase 3, found in Dictyostelium discoideum (Social amoeba).